A 437-amino-acid chain; its full sequence is Putative ABC transporter ATP-binding protein CTC_00753 (437 aa).

ABC transporter domains lie at 1 to 143 (MERE…LPTI) and 179 to 416 (LKFK…QISK). 219–226 (GENGAGKS) contacts ATP.

The protein belongs to the ABC transporter superfamily.

It is found in the cell membrane. Its function is as follows. Probably part of an ABC transporter complex. Responsible for energy coupling to the transport system. In Clostridium tetani (strain Massachusetts / E88), this protein is Putative ABC transporter ATP-binding protein CTC_00753.